Consider the following 203-residue polypeptide: Urease accessory protein UreG (203 aa).

11 to 18 (GPVGSGKT) is a binding site for GTP.

Belongs to the SIMIBI class G3E GTPase family. UreG subfamily. Homodimer. UreD, UreF and UreG form a complex that acts as a GTP-hydrolysis-dependent molecular chaperone, activating the urease apoprotein by helping to assemble the nickel containing metallocenter of UreC. The UreE protein probably delivers the nickel.

It is found in the cytoplasm. In terms of biological role, facilitates the functional incorporation of the urease nickel metallocenter. This process requires GTP hydrolysis, probably effectuated by UreG. This chain is Urease accessory protein UreG, found in Prochlorococcus marinus (strain MIT 9312).